Reading from the N-terminus, the 293-residue chain is Cell adhesion molecule CEACAM21 (293 aa).

Positions 1-34 (MGPPSACPHRECIPWQGLLLTASLLTFWNAPTTA) are cleaved as a signal peptide. The Extracellular segment spans residues 35–240 (WLFIASAPFE…TVKSDDNTLG (206 aa)). Asparagine 111 is a glycosylation site (N-linked (GlcNAc...) asparagine). In terms of domain architecture, Ig-like C2-type spans 147–231 (PSIQASSTTV…SNRSDPLKLT (85 aa)). Cysteine 166 and cysteine 214 are disulfide-bonded. The chain crosses the membrane as a helical span at residues 241–261 (ILIGVLVGSLLVAALVCFLLL). Topologically, residues 262–293 (RKTGRASDQSDFREQQPPASTPGHGPSDSSIS) are cytoplasmic. The segment at 267 to 293 (ASDQSDFREQQPPASTPGHGPSDSSIS) is disordered.

It belongs to the immunoglobulin superfamily. CEA family.

The protein resides in the membrane. The polypeptide is Cell adhesion molecule CEACAM21 (Homo sapiens (Human)).